We begin with the raw amino-acid sequence, 276 residues long: Rho-related protein racO (276 aa).

Residue 11–18 (GDGLIGKT) coordinates GTP. The Effector region motif lies at 34–42 (YSSFDSEYL). Residues 60–64 (ENDGF) and 124–127 (IKTD) contribute to the GTP site. The tract at residues 199 to 276 (FKNNNNNNNY…NKTTNKCKIS (78 aa)) is disordered. Low complexity predominate over residues 200 to 270 (KNNNNNNNYN…SYKNHNNKTT (71 aa)). The residue at position 273 (Cys273) is a Cysteine methyl ester. Residue Cys273 is the site of S-geranylgeranyl cysteine attachment. Positions 274–276 (KIS) are cleaved as a propeptide — removed in mature form.

The protein belongs to the small GTPase superfamily. Rho family.

It is found in the cell membrane. The chain is Rho-related protein racO (racO) from Dictyostelium discoideum (Social amoeba).